Reading from the N-terminus, the 463-residue chain is MATVTATTKVPEIRDVTRIERIGAHSHIRGLGLDDALEPRQASQGMVGQLAARRAAGVVLEMIREGKIAGRAVLIAGQPGTGKTAIAMGMAQALGPDTPFTAIAGSEIFSLEMSKTEALTQAFRRSIGVRIKEETEIIEGEVVEIQIDRPATGTGSKVGKLTLKTTEMETIYDLGTKMIESLTKDKVQAGDVITIDKATGKISKLGRSFTRARDYDAMGSQTKFVQCPDGELQKRKEVVHTVSLHEIDVINSRTQGFLALFSGDTGEIKSEVREQINAKVAEWREEGKAEIIPGVLFIDEVHMLDIESFSFLNRALESDMAPVLIMATNRGITRIRGTSYQSPHGIPIDLLDRLLIVSTSPYSEKDKKQILRIRCEEEDVEMSEDAYTVLTRIGLETSLRYAIQLITAASLVCRKRKGTEVQVDDIKRVYSLFLDESRSTQYMKEYQDAFLFNELKGETMDTS.

N-acetylalanine is present on A2. Residue K9 forms a Glycyl lysine isopeptide (Lys-Gly) (interchain with G-Cter in SUMO2) linkage. An ATP-binding site is contributed by 77–84 (GQPGTGKT). S437 bears the Phosphoserine mark. Glycyl lysine isopeptide (Lys-Gly) (interchain with G-Cter in SUMO2) cross-links involve residues K444 and K456.

The protein belongs to the RuvB family. As to quaternary structure, forms homohexameric rings. Can form a dodecamer with RUVBL1 made of two stacked hexameric rings; however, even though RUVBL1 and RUVBL2 are present in equimolar ratio, the oligomeric status of each hexamer is not known. Oligomerization may regulate binding to nucleic acids and conversely, binding to nucleic acids may affect the dodecameric assembly. Interaction of the complex with DHX34 results in conformational changes of the N-terminus of the RUVBL2 subunits, resulting in loss of nucleotide binding ability and ATP hydrolysis of the complex. Interacts with the transcriptional activation domain of MYC. Interacts with ATF2. Component of the RNA polymerase II holoenzyme complex. May also act to bridge the LEF1/TCF1-CTNNB1 complex and TBP. Component of the NuA4 histone acetyltransferase complex which contains the catalytic subunit KAT5/TIP60 and the subunits EP400, TRRAP/PAF400, BRD8/SMAP, EPC1, DMAP1/DNMAP1, RUVBL1/TIP49, RUVBL2, ING3, actin, ACTL6A/BAF53A, MORF4L1/MRG15, MORF4L2/MRGX, MRGBP, YEATS4/GAS41, VPS72/YL1 and MEAF6. The NuA4 complex interacts with MYC and the adenovirus E1A protein. RUVBL2 interacts with EP400. Component of a NuA4-related complex which contains EP400, TRRAP/PAF400, SRCAP, BRD8/SMAP, EPC1, DMAP1/DNMAP1, RUVBL1/TIP49, RUVBL2, actin, ACTL6A/BAF53A, VPS72 and YEATS4/GAS41. Interacts with NPAT. Component of the chromatin-remodeling INO80 complex; specifically part of a complex module associated with the helicase ATP-binding and the helicase C-terminal domain of INO80. Component of some MLL1/MLL complex, at least composed of the core components KMT2A/MLL1, ASH2L, HCFC1/HCF1, WDR5 and RBBP5, as well as the facultative components BACC1, CHD8, E2F6, HSP70, INO80C, KANSL1, LAS1L, MAX, MCRS1, MGA, MYST1/MOF, PELP1, PHF20, PRP31, RING2, RUVB1/TIP49A, RUVB2/TIP49B, SENP3, TAF1, TAF4, TAF6, TAF7, TAF9 and TEX10. Interacts with IGHMBP2. Interacts with TELO2. Interacts with HINT1. Component of a SWR1-like complex. Component of the R2TP complex composed at least of RUVBL1, RUVBL2, RPAP3 and PIHD1. Component of the PAQosome complex which is responsible for the biogenesis of several protein complexes and which consists of R2TP complex members RUVBL1, RUVBL2, RPAP3 and PIH1D1, URI complex members PFDN2, PFDN6, PDRG1, UXT and URI1 as well as ASDURF, POLR2E and DNAAF10/WDR92. Interacts with ITFG1. Interacts with ZMYND10. Interacts with WAC; WAC positively regulates MTOR activity by promoting the assembly of the TTT complex composed of TELO2, TTI1 and TTI2 and the RUVBL complex composed of RUVBL1 and RUVBL2 into the TTT-RUVBL complex which leads to the dimerization of the mTORC1 complex and its subsequent activation. Forms a complex with APPL1 and APPL2. Interacts with ZNHIT2 (via HIT-type zinc finger) in the presence of ATP or ADP; shows a stronger interaction in the presence of ADP. The RUVBL1/RUVBL2 complex interacts with ZNHIT1 (via HIT-type zinc finger), ZNHIT3 (via HIT-type zinc finger), ZNHIT6 (via HIT-type zinc finger) and DDX59/ZNHIT5 (via HIT-type zinc finger) in the presence of ADP. Interacts with NOPCHAP1; the interaction is direct and disrupted upon ATP binding. Interacts with SMG1.

It is found in the nucleus matrix. The protein localises to the nucleus. The protein resides in the nucleoplasm. Its subcellular location is the cytoplasm. It localises to the membrane. It is found in the dynein axonemal particle. It catalyses the reaction ATP + H2O = ADP + phosphate + H(+). Functionally, possesses single-stranded DNA-stimulated ATPase and ATP-dependent DNA helicase (5' to 3') activity; hexamerization is thought to be critical for ATP hydrolysis and adjacent subunits in the ring-like structure contribute to the ATPase activity. Component of the NuA4 histone acetyltransferase complex which is involved in transcriptional activation of select genes principally by acetylation of nucleosomal histones H4 and H2A. This modification may both alter nucleosome-DNA interactions and promote interaction of the modified histones with other proteins which positively regulate transcription. This complex may be required for the activation of transcriptional programs associated with oncogene and proto-oncogene mediated growth induction, tumor suppressor mediated growth arrest and replicative senescence, apoptosis, and DNA repair. The NuA4 complex ATPase and helicase activities seem to be, at least in part, contributed by the association of RUVBL1 and RUVBL2 with EP400. NuA4 may also play a direct role in DNA repair when recruited to sites of DNA damage. Component of a SWR1-like complex that specifically mediates the removal of histone H2A.Z/H2AZ1 from the nucleosome. Proposed core component of the chromatin remodeling INO80 complex which exhibits DNA- and nucleosome-activated ATPase activity and catalyzes ATP-dependent nucleosome sliding. Plays an essential role in oncogenic transformation by MYC and also modulates transcriptional activation by the LEF1/TCF1-CTNNB1 complex. May also inhibit the transcriptional activity of ATF2. Involved in the endoplasmic reticulum (ER)-associated degradation (ERAD) pathway where it negatively regulates expression of ER stress response genes. May play a role in regulating the composition of the U5 snRNP complex. This chain is RuvB-like 2 (RUVBL2), found in Bos taurus (Bovine).